The sequence spans 190 residues: Somatotropin (190 aa).

Position 19 (H19) interacts with Zn(2+). The cysteines at positions 52 and 163 are disulfide-linked. S105 carries the phosphoserine modification. A Zn(2+)-binding site is contributed by E172. A disulfide bridge connects residues C180 and C188.

This sequence belongs to the somatotropin/prolactin family.

Its subcellular location is the secreted. In terms of biological role, plays an important role in growth control. Its major role in stimulating body growth is to stimulate the liver and other tissues to secrete IGF1. It stimulates both the differentiation and proliferation of myoblasts. It also stimulates amino acid uptake and protein synthesis in muscle and other tissues. In Balaenoptera borealis (Sei whale), this protein is Somatotropin (GH1).